We begin with the raw amino-acid sequence, 172 residues long: C-phycocyanin subunit beta (172 aa).

The residue at position 72 (N72) is an N4-methylasparagine. Residues C82 and C153 each contribute to the (2R,3E)-phycocyanobilin site.

It belongs to the phycobiliprotein family. In terms of assembly, heterodimer of an alpha and a beta subunit, which further assembles into trimers and the trimers into hexamers. Contains two covalently linked bilin chromophores. The chromophore on position 82 is added by the phycocyanobilin lyase CpcUS, while the chromophore on position 153 is added by the phycocyanobilin lyase CpcT.

Its subcellular location is the cellular thylakoid membrane. Functionally, light-harvesting photosynthetic bile pigment-protein from the phycobiliprotein complex (phycobilisome, PBS). Phycocyanin is the major phycobiliprotein in the PBS rod. The polypeptide is C-phycocyanin subunit beta (cpcB) (Picosynechococcus sp. (strain ATCC 27264 / PCC 7002 / PR-6) (Agmenellum quadruplicatum)).